Reading from the N-terminus, the 411-residue chain is Aspartokinase (411 aa).

Residue 7–10 (KFGG) participates in ATP binding. 25-30 (RVIEEK) is a binding site for substrate. Residue Ser-41 participates in ATP binding. Substrate is bound by residues 47–49 (TDE), Glu-74, 125–126 (LN), 150–153 (RGGS), and Ser-153. Residues 173–174 (TD) and 179–184 (FTTDPR) each bind ATP. 2 ACT domains span residues 264-338 (VTVF…SETG) and 344-411 (IVGS…KSER). Residues 289–291 (NVD), Gln-295, 355–356 (VA), 369–370 (QV), and 376–377 (SE) each bind substrate.

It belongs to the aspartokinase family. As to quaternary structure, tetramer consisting of 2 isoforms Alpha (catalytic and regulation) and of a homodimer of 2 isoforms Beta (regulation).

The enzyme catalyses L-aspartate + ATP = 4-phospho-L-aspartate + ADP. It functions in the pathway amino-acid biosynthesis; L-lysine biosynthesis via DAP pathway; (S)-tetrahydrodipicolinate from L-aspartate: step 1/4. The protein operates within amino-acid biosynthesis; L-methionine biosynthesis via de novo pathway; L-homoserine from L-aspartate: step 1/3. Its pathway is amino-acid biosynthesis; L-threonine biosynthesis; L-threonine from L-aspartate: step 1/5. With respect to regulation, lysine-sensitive. Its function is as follows. Catalyzes the phosphorylation of the beta-carboxyl group of aspartic acid with ATP to yield 4-phospho-L-aspartate, which is involved in the branched biosynthetic pathway leading to the biosynthesis of amino acids threonine, isoleucine and methionine. The protein is Aspartokinase (lysC) of Bacillus sp. (strain MGA3).